We begin with the raw amino-acid sequence, 57 residues long: Phospholipase A2 superbin b (57 aa).

Ca(2+) is bound by residues Tyr-28, Gly-30, and Gly-32. A disulfide bridge links Cys-29 with Cys-45. Residue His-48 is part of the active site. Position 49 (Asp-49) interacts with Ca(2+).

Requires Ca(2+) as cofactor. As to expression, expressed by the venom gland.

It localises to the secreted. It carries out the reaction a 1,2-diacyl-sn-glycero-3-phosphocholine + H2O = a 1-acyl-sn-glycero-3-phosphocholine + a fatty acid + H(+). Snake venom phospholipase A2 (PLA2) that inhibits collagen-induced platelet aggregation. In terms of inhibition of platelet aggregation, superbin b is more potent as superbin c, and d. PLA2 catalyzes the calcium-dependent hydrolysis of the 2-acyl groups in 3-sn-phosphoglycerides. This is Phospholipase A2 superbin b from Austrelaps superbus (Lowland copperhead snake).